A 452-amino-acid chain; its full sequence is Prephenate dehydrogenase [NADP(+)] (452 aa).

Residue 14–43 (KVIGIIGLGDMGLLYANKFTDAGWGVICCD) participates in NADP(+) binding. In terms of domain architecture, Prephenate/arogenate dehydrogenase spans 14-297 (KVIGIIGLGD…GKHTGLLLLD (284 aa)).

This sequence belongs to the prephenate/arogenate dehydrogenase family.

It catalyses the reaction prephenate + NADP(+) = 3-(4-hydroxyphenyl)pyruvate + CO2 + NADPH. It functions in the pathway amino-acid biosynthesis; L-tyrosine biosynthesis; (4-hydroxyphenyl)pyruvate from prephenate (NADP(+) route): step 1/1. The sequence is that of Prephenate dehydrogenase [NADP(+)] (TYR1) from Saccharomyces cerevisiae (strain ATCC 204508 / S288c) (Baker's yeast).